The chain runs to 515 residues: Galactokinase (515 aa).

4 residues coordinate alpha-D-galactose: Arg48, Asp54, His55, and Asp57. Residues Gly155, Gly157, Ser159, and Ser160 each coordinate ATP. Residue Asp205 coordinates alpha-D-galactose. The Proton acceptor role is filled by Asp205. ATP is bound by residues Ser249, Asn250, and Lys251. Residue Tyr259 coordinates alpha-D-galactose.

Belongs to the GHMP kinase family. GalK subfamily.

It carries out the reaction alpha-D-galactose + ATP = alpha-D-galactose 1-phosphate + ADP + H(+). It functions in the pathway carbohydrate metabolism; galactose metabolism. In terms of biological role, galactokinase is a key enzyme in the galactose metabolism where it catalyzes the conversion of alpha-D-galactose to galactose 1-phosphate. Can also induce the transcription of the gal genes in response to the organism being challenged with galactose as the sole source of carbon. In Candida albicans (Yeast), this protein is Galactokinase.